Consider the following 61-residue polypeptide: Calprismin (61 aa).

In terms of processing, glycosylated. Expressed by the calcifying mantle epithelium and incorporated into the shell's calcitic prismatic layer.

The protein is Calprismin of Pinna nobilis (Noble pen shell).